Here is a 136-residue protein sequence, read N- to C-terminus: METSVSRVTVSLTLLVLIICSADAMNYLAFPRMGRARPGYLAFPRMGRSQMKTETGTDCCGLGMKSEFVIGQEGKEELRHGACSSSVACCAGLREIVDQKQDGVFFSMCVPDFVASRSSEESSSEVLSKLKSLLQK.

The N-terminal stretch at 1–24 (METSVSRVTVSLTLLVLIICSADA) is a signal peptide. Residues methionine 33 and methionine 46 each carry the methionine amide modification. A propeptide spans 49–135 (SQMKTETGTD…VLSKLKSLLQ (87 aa)) (carboxy-terminal peptide).

This sequence belongs to the SCP family. Contains three disulfide bonds. In terms of tissue distribution, highly expressed in the buccal ganglion.

Its subcellular location is the secreted. Involved in the stimulation of contractile activity in the gut, the increase of the amplitude of the heart beat, and enhancement of the contractile response of the radula closer muscle. The chain is Small cardioactive peptides from Aplysia californica (California sea hare).